A 491-amino-acid polypeptide reads, in one-letter code: PE-PGRS family protein PE_PGRS26 (491 aa).

One can recognise a PE domain in the interval 1–93; the sequence is MSNVMVVPGM…VGSYAAAEAA (93 aa). 2 stretches are compositionally biased toward gly residues: residues 207 to 221 and 229 to 238; these read NGGT…GGGL and GGNGGGGDAG. 3 disordered regions span residues 207 to 238, 255 to 275, and 444 to 491; these read NGGT…GDAG, DGGA…ARGG, and AGGN…GKHG. Over residues 444–485 the composition is skewed to gly residues; it reads AGGNGGDGGPSQGGGNPGFGGDGGTGGPGGVGVPDGIGGANG.

The protein belongs to the mycobacterial PE family. PGRS subfamily.

Its subcellular location is the cell surface. This is PE-PGRS family protein PE_PGRS26 from Mycobacterium tuberculosis (strain ATCC 25618 / H37Rv).